The following is a 143-amino-acid chain: Actin-depolymerizing factor 2 (143 aa).

Residues 5-139 (ASGMAVHDDC…GLDVFRSRAG (135 aa)) form the ADF-H domain.

Belongs to the actin-binding proteins ADF family.

In terms of biological role, actin-depolymerizing protein. Severs actin filaments (F-actin) and binds to actin monomers. In Petunia hybrida (Petunia), this protein is Actin-depolymerizing factor 2 (ADF2).